We begin with the raw amino-acid sequence, 157 residues long: Protein Smg homolog (157 aa).

It belongs to the Smg family.

The sequence is that of Protein Smg homolog from Xylella fastidiosa (strain M23).